An 825-amino-acid polypeptide reads, in one-letter code: IQ and AAA domain-containing protein 1-like (825 aa).

Positions 206 to 235 (RDQGAIVIQKVWKGYLQRKRIEQDRRVEME) constitute an IQ domain. The span at 344–366 (QAQESRKKDQEKKEKNKEKEKEK) shows a compositional bias: basic and acidic residues. Disordered stretches follow at residues 344–378 (QAQE…KEEK) and 459–487 (DREE…KDLT). Over residues 467–482 (KSPKKKGGKKSGKKKK) the composition is skewed to basic residues. 572 to 579 (GPSGMGKK) contacts ATP.

The protein belongs to the AAA ATPase family.

This chain is IQ and AAA domain-containing protein 1-like (Iqca1l), found in Mus musculus (Mouse).